We begin with the raw amino-acid sequence, 426 residues long: Trigger factor (426 aa).

A PPIase FKBP-type domain is found at 165–239; that stretch reads GDVYKLNEAG…ISEIKRLELP (75 aa).

The protein belongs to the FKBP-type PPIase family. Tig subfamily.

It is found in the cytoplasm. It carries out the reaction [protein]-peptidylproline (omega=180) = [protein]-peptidylproline (omega=0). In terms of biological role, involved in protein export. Acts as a chaperone by maintaining the newly synthesized protein in an open conformation. Functions as a peptidyl-prolyl cis-trans isomerase. This is Trigger factor from Pelodictyon phaeoclathratiforme (strain DSM 5477 / BU-1).